We begin with the raw amino-acid sequence, 344 residues long: Dihydroorotase (344 aa).

His13 and His15 together coordinate Zn(2+). Residues 15 to 17 (HFR) and Asn41 contribute to the substrate site. Residues Lys98, His135, and His173 each coordinate Zn(2+). Residue Lys98 is modified to N6-carboxylysine. A substrate-binding site is contributed by His135. Leu218 contacts substrate. Asp246 is a binding site for Zn(2+). Asp246 is an active-site residue. The substrate site is built by His250 and Ala262.

This sequence belongs to the metallo-dependent hydrolases superfamily. DHOase family. Class II DHOase subfamily. Homodimer. Zn(2+) serves as cofactor.

The catalysed reaction is (S)-dihydroorotate + H2O = N-carbamoyl-L-aspartate + H(+). It functions in the pathway pyrimidine metabolism; UMP biosynthesis via de novo pathway; (S)-dihydroorotate from bicarbonate: step 3/3. Its function is as follows. Catalyzes the reversible cyclization of carbamoyl aspartate to dihydroorotate. The chain is Dihydroorotase from Shewanella sediminis (strain HAW-EB3).